The chain runs to 192 residues: Adenylate kinase (192 aa).

10 to 18 is a binding site for ATP; the sequence is GVPGVGGTT.

This sequence belongs to the archaeal adenylate kinase family. In terms of assembly, monomer.

The protein localises to the cytoplasm. It carries out the reaction AMP + ATP = 2 ADP. The protein is Adenylate kinase of Methanococcus maripaludis (strain C6 / ATCC BAA-1332).